Here is a 267-residue protein sequence, read N- to C-terminus: GTP cyclohydrolase MptA (267 aa).

This sequence belongs to the GTP cyclohydrolase IV family. As to quaternary structure, homodimer. The cofactor is Fe(2+).

It catalyses the reaction GTP + H2O = 7,8-dihydroneopterin 2',3'-cyclic phosphate + formate + diphosphate + H(+). It participates in cofactor biosynthesis; 5,6,7,8-tetrahydromethanopterin biosynthesis. Converts GTP to 7,8-dihydro-D-neopterin 2',3'-cyclic phosphate, the first intermediate in the biosynthesis of coenzyme methanopterin. The polypeptide is GTP cyclohydrolase MptA (Pyrococcus furiosus (strain ATCC 43587 / DSM 3638 / JCM 8422 / Vc1)).